The sequence spans 566 residues: OTU domain-containing protein 5 (566 aa).

2 disordered regions span residues Met1–Leu117 and Pro146–Tyr175. The span at Pro11–Pro30 shows a compositional bias: pro residues. The segment covering Arg32–Gly47 has biased composition (gly residues). A compositionally biased stretch (pro residues) spans Ala63 to Pro75. Residue Ser64 is modified to Phosphoserine. Residues Ala84–Gln97 show a composition bias toward low complexity. Residues Gly105 to Asp115 are compositionally biased toward gly residues. Ser165 is modified (phosphoserine). At Tyr175 the chain carries Phosphotyrosine. Ser177 is subject to Phosphoserine. Phosphothreonine is present on Thr195. Positions Phe213–Pro336 constitute an OTU domain. The interval Met218 to Cys224 is cys-loop. Residue Asp221 is part of the active site. Cys224 (nucleophile) is an active-site residue. The tract at residues Lys273–Ile283 is variable-loop. Phosphoserine is present on Ser323. The segment at Tyr324 to His329 is his-loop. His329 is an active-site residue. 2 positions are modified to phosphoserine: Ser332 and Ser370. A disordered region spans residues Ala413–Gly497. Composition is skewed to low complexity over residues Ala425 to Ser438 and Ser445 to Pro457. Ser447 is modified (phosphoserine). Thr502 bears the Phosphothreonine mark. Ser503 carries the post-translational modification Phosphoserine.

Belongs to the peptidase C85 family. Interacts with TRAF3. In terms of processing, phosphorylation at Ser-177 is required for deubiquitinating activity. Phosphorylation at Ser-323, Ser-332 and Ser-503 by MTOR promotes its activity.

It localises to the nucleus. It carries out the reaction Thiol-dependent hydrolysis of ester, thioester, amide, peptide and isopeptide bonds formed by the C-terminal Gly of ubiquitin (a 76-residue protein attached to proteins as an intracellular targeting signal).. Its activity is regulated as follows. Inhibited by N-ethyl-maleimide (NEM). In terms of biological role, deubiquitinating enzyme that functions as a negative regulator of the innate immune system. Has peptidase activity towards 'Lys-48'- and 'Lys-63'-linked polyubiquitin chains. Can also cleave 'Lys-11'-linked ubiquitin chains (in vitro). Acts via TRAF3 deubiquitination and subsequent suppression of type I interferon (IFN) production. Controls neuroectodermal differentiation through cleaving 'Lys-48'-linked ubiquitin chains to counteract degradation of select chromatin regulators such as ARID1A, HDAC2 and HCF1. Acts as a positive regulator of mTORC1 and mTORC2 signaling following phosphorylation by MTOR: acts by mediating deubiquitination of BTRC, leading to its stability. This Rattus norvegicus (Rat) protein is OTU domain-containing protein 5.